We begin with the raw amino-acid sequence, 198 residues long: Transcriptional regulator GfcR (198 aa).

Belongs to the purine/pyrimidine phosphoribosyltransferase family. GfcR subfamily.

The sequence is that of Transcriptional regulator GfcR from Thermoplasma acidophilum (strain ATCC 25905 / DSM 1728 / JCM 9062 / NBRC 15155 / AMRC-C165).